The following is a 293-amino-acid chain: MPELPEVETVRRGLQPVMEGAKIVTAEARRGDLRFPFQPDFVKRLQGQTVRGLGRRAKYLLADLGSGDVLLMHLGMSGSFRVIKPEHEETPGEFHYPRGKDSVHDHVVFHMSSGADIVFNDPRRFGFMKIIGRGEIETEPHLKDLGPEPLGNEFDAAMLARACAGKKTSLKAALLDQRVVAGLGNIYVCEALFRAHLSPRRLAATLATRKGEPTDHAKRLVEAIHTVLNEAIRAGGSSLRDHRQTTGELGYFQHSFQVYDREGEPCRTDGCEGVVKRFVQNGRSTFWCPKCQR.

The Schiff-base intermediate with DNA role is filled by Pro-2. The active-site Proton donor is the Glu-3. The Proton donor; for beta-elimination activity role is filled by Lys-58. 3 residues coordinate DNA: His-104, Arg-123, and Lys-166. The FPG-type zinc finger occupies 257–293 (QVYDREGEPCRTDGCEGVVKRFVQNGRSTFWCPKCQR). Residue Arg-283 is the Proton donor; for delta-elimination activity of the active site.

Belongs to the FPG family. As to quaternary structure, monomer. The cofactor is Zn(2+).

The enzyme catalyses Hydrolysis of DNA containing ring-opened 7-methylguanine residues, releasing 2,6-diamino-4-hydroxy-5-(N-methyl)formamidopyrimidine.. The catalysed reaction is 2'-deoxyribonucleotide-(2'-deoxyribose 5'-phosphate)-2'-deoxyribonucleotide-DNA = a 3'-end 2'-deoxyribonucleotide-(2,3-dehydro-2,3-deoxyribose 5'-phosphate)-DNA + a 5'-end 5'-phospho-2'-deoxyribonucleoside-DNA + H(+). Functionally, involved in base excision repair of DNA damaged by oxidation or by mutagenic agents. Acts as a DNA glycosylase that recognizes and removes damaged bases. Has a preference for oxidized purines, such as 7,8-dihydro-8-oxoguanine (8-oxoG). Has AP (apurinic/apyrimidinic) lyase activity and introduces nicks in the DNA strand. Cleaves the DNA backbone by beta-delta elimination to generate a single-strand break at the site of the removed base with both 3'- and 5'-phosphates. The polypeptide is Formamidopyrimidine-DNA glycosylase (Bradyrhizobium sp. (strain ORS 278)).